The sequence spans 116 residues: Antimicrobial peptide 1b (116 aa).

A signal peptide spans methionine 1 to glycine 34. The region spanning alanine 35–glycine 77 is the Chitin-binding type-1 domain. 5 cysteine pairs are disulfide-bonded: cysteine 38/cysteine 53, cysteine 47/cysteine 59, cysteine 50/cysteine 78, cysteine 52/cysteine 66, and cysteine 71/cysteine 75. Residues aspartate 80 to proline 116 constitute a propeptide that is removed on maturation. The interval alanine 89–proline 116 is disordered. Positions serine 93–arginine 105 are enriched in low complexity.

Functionally, binds chitin. Has antifungal activity against the fungi F.solani (IC(50)=5 ug/ml), F.verticillioides (IC(50)=30 ug/ml), F.oxysporum (IC(50)=5 ug/ml), B.sorokiniana (IC(50)=5 ug/ml), B.cinerea (IC(50)=20 ug/ml) and N.crassa (IC(50)=10 ug/ml). Inhibits hyphal elongation and causes browning of hyphae in F.oxysporum. Causes destruction and discoloration of spores in B.sorokiniana. Inhibits the development of disease caused by the fungus P.infestans on potato tubers. Has antibacterial activity against the Gram-negative bacteria P.syringae and E.carotovora, and the Gram-positive bacterium C.michiganensis. Has antifungal activity against F.verticillioides (IC(50)=2.7 ug/ml). At concentrations between 45 uM and 225 uM, inhibits activity of metalloproteinase fungalysin Fv-cpm from F.verticillioides. This is Antimicrobial peptide 1b from Triticum kiharae (Wheat).